The chain runs to 160 residues: MPASNSCSPPGGDHKPPPPPPSHPSPSPTPSYPPPPNNGGGYYPPPPDNTSHTPPPPSSTPPNNGGGGNDGGSGNTGGGNSDDGSDGGHSICPSGLYSSAQCCSTDVLGIADLNCKPPSRTPKDGSDFAKICSNTGSEARCCVIPVAGQALLCEDVVGAN.

Cystine bridges form between C92–C141, C102–C132, C103–C115, and C142–C153.

This sequence belongs to the cerato-ulmin hydrophobin family. In terms of assembly, homodimer. Homodimers further self-assemble to form highly ordered films at water-air interfaces through intermolecular interactions.

It localises to the secreted. Its subcellular location is the cell wall. Aerial growth, conidiation, and dispersal of filamentous fungi in the environment rely upon a capability of their secreting small amphipathic proteins called hydrophobins (HPBs) with low sequence identity. Class I can self-assemble into an outermost layer of rodlet bundles on aerial cell surfaces, conferring cellular hydrophobicity that supports fungal growth, development and dispersal; whereas Class II form highly ordered films at water-air interfaces through intermolecular interactions but contribute nothing to the rodlet structure. In Trichoderma asperellum (strain ATCC 204424 / CBS 433.97 / NBRC 101777), this protein is Class II hydrophobin 8.